The chain runs to 477 residues: MSDTKRNTIGKFGLLSLTFAAVYSFNNVINNNIELGLASAPMFFLATIFYFIPFCLIIAEFVSLNKNSEAGVYAWVKSSLGGRWAFITAYTYWFVNLFFFTSLLPRVIAYASYAFLGYEYIMTPVATTIISMVLFAFSTWVSTNGAKMLGPITSVTSTLMLLLTLSYILLAGTALVGGVQPADAITVDAMIPNFNWAFLGVTTWIFMAAGGAESVAVYVNDVKGGSKSFVKVIILAGIFIGVLYSVSSVLINVFVSSKELKFTGGSVQVFHGMAAYFGLPEALMNRFVGLVSFTAMFGSLLMWTATPVKIFFSEIPEGIFGKKTVELNENGVPARAAWIQFLIVIPLMIIPMLGSNTVQDLMNTIINMTAAASMLPPLFIMLAYLNLRAKLDHLPRDFRMGSRRTGIIVVSMLIAIFAVGFVASTFPTGANILTIIFYNVGGIVIFLGFAWWKYSKYIKGLTAEERHIEATPASNVD.

Residues 1-8 are Periplasmic-facing; it reads MSDTKRNT. Residues 9-29 form a helical membrane-spanning segment; sequence IGKFGLLSLTFAAVYSFNNVI. Residues 30 to 41 are Cytoplasmic-facing; sequence NNNIELGLASAP. Residues 42 to 62 traverse the membrane as a helical segment; the sequence is MFFLATIFYFIPFCLIIAEFV. At 63-83 the chain is on the periplasmic side; that stretch reads SLNKNSEAGVYAWVKSSLGGR. A helical membrane pass occupies residues 84 to 104; it reads WAFITAYTYWFVNLFFFTSLL. Over 105 to 120 the chain is Cytoplasmic; the sequence is PRVIAYASYAFLGYEY. Residues 121 to 141 form a helical membrane-spanning segment; that stretch reads IMTPVATTIISMVLFAFSTWV. Over 142-158 the chain is Periplasmic; that stretch reads STNGAKMLGPITSVTST. A helical transmembrane segment spans residues 159 to 179; the sequence is LMLLLTLSYILLAGTALVGGV. Over 180 to 196 the chain is Cytoplasmic; sequence QPADAITVDAMIPNFNW. Residues 197 to 217 traverse the membrane as a helical segment; sequence AFLGVTTWIFMAAGGAESVAV. The Periplasmic segment spans residues 218–232; sequence YVNDVKGGSKSFVKV. A helical membrane pass occupies residues 233-253; that stretch reads IILAGIFIGVLYSVSSVLINV. Residues 254–263 are Cytoplasmic-facing; that stretch reads FVSSKELKFT. A helical transmembrane segment spans residues 264-284; that stretch reads GGSVQVFHGMAAYFGLPEALM. The Periplasmic segment spans residues 285-286; sequence NR. The helical transmembrane segment at 287 to 307 threads the bilayer; the sequence is FVGLVSFTAMFGSLLMWTATP. At 308-335 the chain is on the cytoplasmic side; sequence VKIFFSEIPEGIFGKKTVELNENGVPAR. The helical transmembrane segment at 336–356 threads the bilayer; the sequence is AAWIQFLIVIPLMIIPMLGSN. Residues 357-364 are Periplasmic-facing; the sequence is TVQDLMNT. The helical transmembrane segment at 365–385 threads the bilayer; it reads IINMTAAASMLPPLFIMLAYL. Over 386-405 the chain is Cytoplasmic; it reads NLRAKLDHLPRDFRMGSRRT. Residues 406-426 traverse the membrane as a helical segment; it reads GIIVVSMLIAIFAVGFVASTF. Topologically, residues 427 to 431 are periplasmic; that stretch reads PTGAN. A helical transmembrane segment spans residues 432-452; that stretch reads ILTIIFYNVGGIVIFLGFAWW. Residues 453–477 are Cytoplasmic-facing; it reads KYSKYIKGLTAEERHIEATPASNVD.

Belongs to the amino acid-polyamine-organocation (APC) superfamily.

Its subcellular location is the cell inner membrane. In Escherichia coli (strain K12), this protein is Inner membrane transporter YgjI (ygjI).